A 174-amino-acid polypeptide reads, in one-letter code: Shikimate kinase (174 aa).

Residue 10-15 (GSGKTA) coordinates ATP. Threonine 14 provides a ligand contact to Mg(2+). The substrate site is built by aspartate 32, arginine 56, and glycine 78. ATP is bound at residue arginine 118. Arginine 137 is a substrate binding site. Arginine 154 is an ATP binding site.

It belongs to the shikimate kinase family. Monomer. Mg(2+) is required as a cofactor.

It is found in the cytoplasm. The catalysed reaction is shikimate + ATP = 3-phosphoshikimate + ADP + H(+). Its pathway is metabolic intermediate biosynthesis; chorismate biosynthesis; chorismate from D-erythrose 4-phosphate and phosphoenolpyruvate: step 5/7. Functionally, catalyzes the specific phosphorylation of the 3-hydroxyl group of shikimic acid using ATP as a cosubstrate. This Symbiobacterium thermophilum (strain DSM 24528 / JCM 14929 / IAM 14863 / T) protein is Shikimate kinase.